We begin with the raw amino-acid sequence, 331 residues long: MVKTANSAYDNFIKNSVDLDSEQTGIARNSRDWLYGNLKNFPKVVENFPKLYAGKEIIGFGSFRRRTKIRPLDDIDLMLVFTGEGTTYTEYADKIVLNVPGDADKLRKLVNDDGTLNSIRVIEKIKSSLSIIPQYKKAEIHRRQEATTLELSTYDWVFDIVPAFITSENAYGKSYYIIPDGSGNWKKTDPRIDNERATETNQKFDGNVLGLIRVIKYWNTNRSKKISSYLMENIVLDYFQNKFYWNGMKQELRGFFEYLKTSIYNSHYDPKGIQGDLNTLDYNTKLSISNQASGCFENIDLAIRYESLGQHKEAIECWKKVFGDEFPSHED.

The protein belongs to the CD-NTase family. D12 subfamily.

Functionally, cyclic nucleotide synthase (second messenger synthase) of a CBASS antivirus system. CBASS (cyclic oligonucleotide-based antiphage signaling system) provides immunity against bacteriophage. The CD-NTase protein synthesizes cyclic nucleotides in response to infection; these serve as specific second messenger signals. The signals activate a diverse range of effectors, leading to bacterial cell death and thus abortive phage infection. A type I-B CBASS system. Its function is as follows. Probably a cyclic nucleotide synthase that makes second messenger nucleotide which activates a CBASS antiviral defense system. Protects B.subtilis against phage infection. When IK1_05630 and IK1_05631 are introduced in B.subtilis BEST7003 there is 1000-fold protection against phage SBSphiC. Both genes are required for protection. Activation leads to bacterial cell lysis and death, which occurs before the phage has finished its replication cycle, thus protecting non-infected bacteria by aborting the phage infection and preventing its propagation. The sequence is that of Probable cyclic nucleotide synthase IK1_05630 from Bacillus cereus (strain VD146).